A 497-amino-acid polypeptide reads, in one-letter code: Dihydrolipoyl dehydrogenase (497 aa).

FAD-binding positions include 60 to 69 (EKEPSLGGTC), Lys-78, Gly-142, and 170 to 172 (TGS). A disulfide bond links Cys-69 and Cys-74. NAD(+) is bound by residues 207-214 (GAGVIGLE), Glu-230, Val-264, and Gly-302. Residues Asp-343 and 349-352 (MLAH) each bind FAD. His-475 serves as the catalytic Proton acceptor.

The protein belongs to the class-I pyridine nucleotide-disulfide oxidoreductase family. Homodimer. FAD is required as a cofactor.

It is found in the cytoplasm. It catalyses the reaction N(6)-[(R)-dihydrolipoyl]-L-lysyl-[protein] + NAD(+) = N(6)-[(R)-lipoyl]-L-lysyl-[protein] + NADH + H(+). In Manduca sexta (Tobacco hawkmoth), this protein is Dihydrolipoyl dehydrogenase.